Reading from the N-terminus, the 204-residue chain is Cold and drought-regulated protein CORA (204 aa).

18 repeat units span residues 54-59 (YNHGGG), 65-70 (YNHGGG), 71-76 (YNHGGG), 78-83 (YHNGGG), 85-90 (YNHGGG), 98-100 (HGG), 101-103 (HGG), 112-114 (HGG), 115-117 (HGG), 126-128 (HGG), 129-131 (HGG), 164-169 (YNHGGG), 171-176 (YNHGGG), 178-180 (HGG), 181-183 (HGG), 184-186 (HGG), 187-189 (HGG), and 190-192 (HGG). A 7 X 6 AA repeats of Y-N-H-G-G-G region spans residues 54 to 176 (YNHGGGYNGG…GGGGYNHGGG (123 aa)). An 11 X 3 AA repeats of H-G-G region spans residues 98-192 (HGGHGGGGYN…GHGGHGGHGG (95 aa)). Over residues 169 to 194 (GGYNHGGGGHGGHGGHGGHGGHGGHG) the composition is skewed to gly residues. The tract at residues 169–204 (GGYNHGGGGHGGHGGHGGHGGHGGHGAVQTEDNTQN) is disordered.

It belongs to the GRP family.

Functionally, may be involved in resistance of the plant to environmental stress. The sequence is that of Cold and drought-regulated protein CORA (CORA) from Medicago sativa (Alfalfa).